We begin with the raw amino-acid sequence, 597 residues long: Cytosolic Fe-S cluster assembly factor nar1 (597 aa).

[4Fe-4S] cluster contacts are provided by Cys-20, Cys-62, Cys-65, Cys-68, Cys-216, and Cys-271. The interval 428-449 (RASRLPGGNRRLPVGRGAASGS) is disordered. [4Fe-4S] cluster is bound by residues Cys-462 and Cys-466. The segment at 479–505 (REASSSVQSSTSAEVPDSSSKPTPHEQ) is disordered.

Belongs to the NARF family.

In terms of biological role, component of the cytosolic Fe/S protein assembly machinery. Required for maturation of extramitochondrial Fe/S proteins. May play a role in the transfer of pre-assembled Fe/S clusters to target apoproteins. The chain is Cytosolic Fe-S cluster assembly factor nar1 (nar1) from Aspergillus niger (strain ATCC MYA-4892 / CBS 513.88 / FGSC A1513).